The sequence spans 227 residues: Ribonuclease 3 (227 aa).

The 123-residue stretch at 6–128 folds into the RNase III domain; the sequence is ASDYQQRIGY…VIAAIYLDAD (123 aa). E41 contributes to the Mg(2+) binding site. D45 is an active-site residue. Mg(2+) contacts are provided by D114 and E117. The active site involves E117. One can recognise a DRBM domain in the interval 155–225; that stretch reads DPKTRLQEWL…ASHAIDQLDS (71 aa). Residues 203–212 are compositionally biased toward basic and acidic residues; it reads GEGSSRRLAE. The segment at 203–227 is disordered; sequence GEGSSRRLAEQDAASHAIDQLDSNK.

Belongs to the ribonuclease III family. In terms of assembly, homodimer. Requires Mg(2+) as cofactor.

Its subcellular location is the cytoplasm. The catalysed reaction is Endonucleolytic cleavage to 5'-phosphomonoester.. In terms of biological role, digests double-stranded RNA. Involved in the processing of primary rRNA transcript to yield the immediate precursors to the large and small rRNAs (23S and 16S). Processes some mRNAs, and tRNAs when they are encoded in the rRNA operon. Processes pre-crRNA and tracrRNA of type II CRISPR loci if present in the organism. This chain is Ribonuclease 3, found in Xylella fastidiosa (strain 9a5c).